A 379-amino-acid chain; its full sequence is 1-deoxy-D-xylulose 5-phosphate reductoisomerase (379 aa).

Positions 10, 11, 12, 13, 38, 39, and 121 each coordinate NADPH. A 1-deoxy-D-xylulose 5-phosphate-binding site is contributed by lysine 122. Glutamate 123 serves as a coordination point for NADPH. Aspartate 147 is a binding site for Mn(2+). Serine 148, glutamate 149, serine 173, and histidine 196 together coordinate 1-deoxy-D-xylulose 5-phosphate. Residue glutamate 149 participates in Mn(2+) binding. Glycine 202 contributes to the NADPH binding site. Positions 209, 214, 215, and 218 each coordinate 1-deoxy-D-xylulose 5-phosphate. Glutamate 218 contributes to the Mn(2+) binding site.

The protein belongs to the DXR family. Requires Mg(2+) as cofactor. It depends on Mn(2+) as a cofactor.

The catalysed reaction is 2-C-methyl-D-erythritol 4-phosphate + NADP(+) = 1-deoxy-D-xylulose 5-phosphate + NADPH + H(+). The protein operates within isoprenoid biosynthesis; isopentenyl diphosphate biosynthesis via DXP pathway; isopentenyl diphosphate from 1-deoxy-D-xylulose 5-phosphate: step 1/6. In terms of biological role, catalyzes the NADPH-dependent rearrangement and reduction of 1-deoxy-D-xylulose-5-phosphate (DXP) to 2-C-methyl-D-erythritol 4-phosphate (MEP). The protein is 1-deoxy-D-xylulose 5-phosphate reductoisomerase of Chlamydia trachomatis serovar L2 (strain ATCC VR-902B / DSM 19102 / 434/Bu).